A 284-amino-acid chain; its full sequence is D-tagatose-1,6-bisphosphate aldolase subunit GatY (284 aa).

The Proton donor role is filled by Asp-82. 2 residues coordinate Zn(2+): His-83 and His-180. Gly-181 contributes to the dihydroxyacetone phosphate binding site. Position 208 (His-208) interacts with Zn(2+). Residues 209–211 (GAS) and 230–233 (NVAT) each bind dihydroxyacetone phosphate.

It belongs to the class II fructose-bisphosphate aldolase family. TagBP aldolase GatY subfamily. In terms of assembly, forms a complex with GatZ. It depends on Zn(2+) as a cofactor.

The catalysed reaction is D-tagatofuranose 1,6-bisphosphate = D-glyceraldehyde 3-phosphate + dihydroxyacetone phosphate. It functions in the pathway carbohydrate metabolism; D-tagatose 6-phosphate degradation; D-glyceraldehyde 3-phosphate and glycerone phosphate from D-tagatose 6-phosphate: step 2/2. In terms of biological role, catalytic subunit of the tagatose-1,6-bisphosphate aldolase GatYZ, which catalyzes the reversible aldol condensation of dihydroxyacetone phosphate (DHAP or glycerone-phosphate) with glyceraldehyde 3-phosphate (G3P) to produce tagatose 1,6-bisphosphate (TBP). Requires GatZ subunit for full activity and stability. Is involved in the catabolism of galactitol. This Escherichia coli O139:H28 (strain E24377A / ETEC) protein is D-tagatose-1,6-bisphosphate aldolase subunit GatY.